The following is a 169-amino-acid chain: Small ribosomal subunit protein uS5 (169 aa).

The S5 DRBM domain occupies 14 to 77 (LQEKVVEVRR…EDAKKNLIVV (64 aa)).

This sequence belongs to the universal ribosomal protein uS5 family. In terms of assembly, part of the 30S ribosomal subunit. Contacts proteins S4 and S8.

With S4 and S12 plays an important role in translational accuracy. In terms of biological role, located at the back of the 30S subunit body where it stabilizes the conformation of the head with respect to the body. The chain is Small ribosomal subunit protein uS5 from Clostridioides difficile (strain 630) (Peptoclostridium difficile).